Reading from the N-terminus, the 203-residue chain is Ras-like protein family member 10A (203 aa).

Residues 1 to 203 (MGGSLRVAVL…ALHPARCSLM (203 aa)) form a small GTPase-like region. A GTP-binding site is contributed by 11-18 (GAPGVGKT). Residues 33-42 (HRPTDGPRLY) carry the Effector region motif. Residues 59–62 (DGDV) and 129–132 (NKRD) each bind GTP. Cys-200 is subject to Cysteine methyl ester. A lipid anchor (S-farnesyl cysteine) is attached at Cys-200. A propeptide spans 201 to 203 (SLM) (removed in mature form).

Belongs to the small GTPase superfamily. Ras family. Isoprenylation is essential for nucleolar localization, and the proliferation-inhibiting activity of RASL10A. Expression appears to be strictly limited to the central nervous system.

Its subcellular location is the cell membrane. It is found in the nucleus. The protein resides in the nucleolus. It carries out the reaction GTP + H2O = GDP + phosphate + H(+). In terms of biological role, potent inhibitor of cellular proliferation. The sequence is that of Ras-like protein family member 10A (RASL10A) from Homo sapiens (Human).